The primary structure comprises 358 residues: MARRQDEQRGGAPLIAEGKSDAEVKLILYHWTHSFSSQKVRLVIAEKALKCEEHDVSLPLSEHNEPWFMRLNSTGEVPVLIHGENIICEATQIIDYLEQTFLDEKTPRLMPDKGSMYYPRVQHYRELLDSLPMDAYTHGCILHPELTVDSMIPAYATTRIRSQIGNTESELKKLAEENPDLQEAYIAKQKRLKSKLLDHDNVKYLKKILDELEKVLDQVETELQRRNEETPEEGRQPWLCGESFTLADVSLAVTLHRLKFLGFARRNWGNGKRPNLETYYERVLKRKTFNKVLGHVNNILISAVLPTAFRVAKKRAPKVLGTTLVVGLLAGMGYFAFMLFRKRLGSMILALRPRPNYF.

A GST N-terminal domain is found at 24-105; that stretch reads VKLILYHWTH…YLEQTFLDEK (82 aa). Residues Lys-50, Lys-172, Lys-173, Lys-188, and Lys-190 each participate in a glycyl lysine isopeptide (Lys-Gly) (interchain with G-Cter in ubiquitin) cross-link. Positions 153–309 constitute a GST C-terminal domain; that stretch reads PAYATTRIRS…LISAVLPTAF (157 aa). Lys-203 is modified (N6-acetyllysine; alternate). Lys-203 is covalently cross-linked (Glycyl lysine isopeptide (Lys-Gly) (interchain with G-Cter in ubiquitin); alternate). Glycyl lysine isopeptide (Lys-Gly) (interchain with G-Cter in ubiquitin) cross-links involve residues Lys-206, Lys-207, and Lys-214. The next 2 helical transmembrane spans lie at 292 to 312 and 320 to 340; these read VLGH…FRVA and LGTT…FMLF. The segment at 320-358 is required for mitochondrial localization; that stretch reads LGTTLVVGLLAGMGYFAFMLFRKRLGSMILALRPRPNYF.

It belongs to the GST superfamily. As to quaternary structure, homodimer. In terms of processing, ubiquitinated by PRKN during mitophagy, leading to its degradation and enhancement of mitophagy. Deubiquitinated by USP30.

Its subcellular location is the mitochondrion outer membrane. It localises to the cytoplasm. In terms of biological role, regulates the mitochondrial network by promoting mitochondrial fission. The protein is Ganglioside-induced differentiation-associated protein 1 (GDAP1) of Bos taurus (Bovine).